The primary structure comprises 58 residues: UPF0339 protein TDE_0826 (58 aa).

This sequence belongs to the UPF0339 family.

This chain is UPF0339 protein TDE_0826, found in Treponema denticola (strain ATCC 35405 / DSM 14222 / CIP 103919 / JCM 8153 / KCTC 15104).